Consider the following 1997-residue polypeptide: MLSHGAGLALWITLSLLQTGLAEPERCNFTLAESKASSHSVSIQWRILGSPCNFSLIYSSDTLGAALCPTFRIDNTTYGCNLQDLQAGTIYNFRIISLDEERTVVLQTDPLPPARFGVSKEKTTSTSLHVWWTPSSGKVTSYEVQLFDENNQKIQGVQIQESTSWNEYTFFNLTAGSKYNIAITAVSGGKRSFSVYTNGSTVPSPVKDIGISTKANSLLISWSHGSGNVERYRLMLMDKGILVHGGVVDKHATSYAFHGLTPGYLYNLTVMTEAAGLQNYRWKLVRTAPMEVSNLKVTNDGSLTSLKVKWQRPPGNVDSYNITLSHKGTIKESRVLAPWITETHFKELVPGRLYQVTVSCVSGELSAQKMAVGRTFPDKVANLEANNNGRMRSLVVSWSPPAGDWEQYRILLFNDSVVLLNITVGKEETQYVMDDTGLVPGRQYEVEVIVESGNLKNSERCQGRTVPLAVLQLRVKHANETSLSIMWQTPVAEWEKYIISLADRDLLLIHKSLSKDAKEFTFTDLVPGRKYMATVTSISGDLKNSSSVKGRTVPAQVTDLHVANQGMTSSLFTNWTQAQGDVEFYQVLLIHENVVIKNESISSETSRYSFHSLKSGSLYSVVVTTVSGGISSRQVVVEGRTVPSSVSGVTVNNSGRNDYLSVSWLLAPGDVDNYEVTLSHDGKVVQSLVIAKSVRECSFSSLTPGRLYTVTITTRSGKYENHSFSQERTVPDKVQGVSVSNSARSDYLRVSWVHATGDFDHYEVTIKNKNNFIQTKSIPKSENECVFVQLVPGRLYSVTVTTKSGQYEANEQGNGRTIPEPVKDLTLRNRSTEDLHVTWSGANGDVDQYEIQLLFNDMKVFPPFHLVNTATEYRFTSLTPGRQYKILVLTISGDVQQSAFIEGFTVPSAVKNIHISPNGATDSLTVNWTPGGGDVDSYTVSAFRHSQKVDSQTIPKHVFEHTFHRLEAGEQYQIMIASVSGSLKNQINVVGRTVPASVQGVIADNAYSSYSLIVSWQKAAGVAERYDILLLTENGILLRNTSEPATTKQHKFEDLTPGKKYKIQILTVSGGLFSKEAQTEGRTVPAAVTDLRITENSTRHLSFRWTASEGELSWYNIFLYNPDGNLQERAQVDPLVQSFSFQNLLQGRMYKMVIVTHSGELSNESFIFGRTVPASVSHLRGSNRNTTDSLWFNWSPASGDFDFYELILYNPNGTKKENWKDKDLTEWRFQGLVPGRKYVLWVVTHSGDLSNKVTAESRTAPSPPSLMSFADIANTSLAITWKGPPDWTDYNDFELQWLPRDALTVFNPYNNRKSEGRIVYGLRPGRSYQFNVKTVSGDSWKTYSKPIFGSVRTKPDKIQNLHCRPQNSTAIACSWIPPDSDFDGYSIECRKMDTQEVEFSRKLEKEKSLLNIMMLVPHKRYLVSIKVQSAGMTSEVVEDSTITMIDRPPPPPPHIRVNEKDVLISKSSINFTVNCSWFSDTNGAVKYFTVVVREADGSDELKPEQQHPLPSYLEYRHNASIRVYQTNYFASKCAENPNSNSKSFNIKLGAEMESLGGKCDPTQQKFCDGPLKPHTAYRISIRAFTQLFDEDLKEFTKPLYSDTFFSLPITTESEPLFGAIEGVSAGLFLIGMLVAVVALLICRQKVSHGRERPSARLSIRRDRPLSVHLNLGQKGNRKTSCPIKINQFEGHFMKLQADSNYLLSKEYEELKDVGRNQSCDIALLPENRGKNRYNNILPYDATRVKLSNVDDDPCSDYINASYIPGNNFRREYIVTQGPLPGTKDDFWKMVWEQNVHNIVMVTQCVEKGRVKCDHYWPADQDSLYYGDLILQMLSESVLPEWTIREFKICGEEQLDAHRLIRHFHYTVWPDHGVPETTQSLIQFVRTVRDYINRSPGAGPTVVHCSAGVGRTGTFIALDRILQQLDSKDSVDIYGAVHDLRLHRVHMVQTECQYVYLHQCVRDVLRARKLRSEQENPLFPIYENVNPEYHRDPVYSRH.

An N-terminal signal peptide occupies residues 1–22 (MLSHGAGLALWITLSLLQTGLA). 17 Fibronectin type-III domains span residues 23–111 (EPER…TDPL), 112–207 (PPAR…SPVK), 203–288 (PSPV…VRTA), 291–378 (EVSN…TFPD), 379–471 (KVAN…LAVL), 467–552 (PLAV…KGRT), 556–641 (QVTD…EGRT), 642–729 (VPSS…QERT), 730–829 (VPDK…TLRN), 819–906 (PEPV…GFTV), 909–1001 (AVKN…VQGV), 995–1083 (PASV…EGRT), 1087–1175 (AVTD…VPAS), 1173–1260 (PASV…SRTA), 1260–1356 (APSP…TKPD), 1357–1448 (KIQN…IDRP), and 1458–1554 (NEKD…EMES). Residues 23-1621 (EPERCNFTLA…ESEPLFGAIE (1599 aa)) are Extracellular-facing. 16 N-linked (GlcNAc...) asparagine glycosylation sites follow: Asn28, Asn53, Asn75, Asn172, Asn198, Asn267, Asn321, Asn414, Asn421, Asn479, Asn544, Asn574, Asn598, Asn652, Asn721, and Asn829. Asn1040, Asn1096, Asn1163, Asn1185, Asn1212, Asn1274, Asn1367, Asn1470, Asn1474, and Asn1518 each carry an N-linked (GlcNAc...) asparagine glycan. A helical membrane pass occupies residues 1622 to 1642 (GVSAGLFLIGMLVAVVALLIC). Residues 1643–1997 (RQKVSHGRER…YHRDPVYSRH (355 aa)) are Cytoplasmic-facing. The Tyrosine-protein phosphatase domain occupies 1703–1963 (LSKEYEELKD…VYLHQCVRDV (261 aa)). Residues Asp1870, 1904 to 1910 (CSAGVGR), and Gln1948 contribute to the substrate site. Cys1904 functions as the Phosphocysteine intermediate in the catalytic mechanism. Phosphotyrosine is present on Tyr1981.

The protein belongs to the protein-tyrosine phosphatase family. Receptor class 3 subfamily. As to quaternary structure, monomer. Interacts with TEK. Interacts via fibronectin type-III 17 domain with CDH5. Detected in a complex with CNTN1 and NRCAM. Interacts (phosphorylated form) with FYN and GRB2. Interacts with IGFBP2.

Its subcellular location is the membrane. The catalysed reaction is O-phospho-L-tyrosyl-[protein] + H2O = L-tyrosyl-[protein] + phosphate. Its function is as follows. Plays an important role in blood vessel remodeling and angiogenesis. Not necessary for the initial formation of blood vessels, but is essential for their maintenance and remodeling. Can induce dephosphorylation of TEK/TIE2, CDH5/VE-cadherin and KDR/VEGFR-2. Regulates angiopoietin-TIE2 signaling in endothelial cells. Acts as a negative regulator of TIE2, and controls TIE2 driven endothelial cell proliferation, which in turn affects blood vessel remodeling during embryonic development and determines blood vessel size during perinatal growth. Essential for the maintenance of endothelial cell contact integrity and for the adhesive function of VE-cadherin in endothelial cells and this requires the presence of plakoglobin. The polypeptide is Receptor-type tyrosine-protein phosphatase beta (PTPRB) (Homo sapiens (Human)).